We begin with the raw amino-acid sequence, 206 residues long: Cell division protein SepF (206 aa).

Basic and acidic residues predominate over residues 31–53 (EEKERRKTERQEQRQAVKQEKRT). Residues 31–81 (EEKERRKTERQEQRQAVKQEKRTFPSQRPAFSEEAPTSSSSKLSAASGSSD) are disordered. Over residues 60–80 (AFSEEAPTSSSSKLSAASGSS) the composition is skewed to low complexity.

This sequence belongs to the SepF family. As to quaternary structure, homodimer. Interacts with FtsZ.

It localises to the cytoplasm. Functionally, cell division protein that is part of the divisome complex and is recruited early to the Z-ring. Probably stimulates Z-ring formation, perhaps through the cross-linking of FtsZ protofilaments. Its function overlaps with FtsA. In Lachnoclostridium phytofermentans (strain ATCC 700394 / DSM 18823 / ISDg) (Clostridium phytofermentans), this protein is Cell division protein SepF.